Here is a 337-residue protein sequence, read N- to C-terminus: Phosphate acyltransferase (337 aa).

Belongs to the PlsX family. Homodimer. Probably interacts with PlsY.

Its subcellular location is the cytoplasm. It carries out the reaction a fatty acyl-[ACP] + phosphate = an acyl phosphate + holo-[ACP]. The protein operates within lipid metabolism; phospholipid metabolism. Its function is as follows. Catalyzes the reversible formation of acyl-phosphate (acyl-PO(4)) from acyl-[acyl-carrier-protein] (acyl-ACP). This enzyme utilizes acyl-ACP as fatty acyl donor, but not acyl-CoA. The polypeptide is Phosphate acyltransferase (Polynucleobacter asymbioticus (strain DSM 18221 / CIP 109841 / QLW-P1DMWA-1) (Polynucleobacter necessarius subsp. asymbioticus)).